The sequence spans 475 residues: F-box protein SKIP22 (475 aa).

Residues 114-133 (DQAKSNPNTSVEDPEGDISG) form a disordered region. The F-box domain maps to 319 to 365 (PPCLMRLPTELKLKILELLPGVSIGNMACVCTEMRYLASDNDLWKQK).

As to quaternary structure, part of a SCF (ASK-cullin-F-box) protein ligase complex. Interacts with SKP1A/ASK1 and SPK1B/ASK2.

The protein resides in the nucleus. Its pathway is protein modification; protein ubiquitination. In terms of biological role, component of SCF(ASK-cullin-F-box) E3 ubiquitin ligase complexes, which may mediate the ubiquitination and subsequent proteasomal degradation of target proteins. In Arabidopsis thaliana (Mouse-ear cress), this protein is F-box protein SKIP22 (SKIP22).